The primary structure comprises 158 residues: uncharacterized protein (158 aa).

This is an uncharacterized protein from Saccharolobus islandicus (Sulfolobus islandicus).